Here is a 41-residue protein sequence, read N- to C-terminus: Photosystem I reaction center subunit IX (41 aa).

The chain crosses the membrane as a helical span at residues 7–27 (YLSTAPVLTLVSLTAVAGLLI).

It belongs to the PsaJ family.

It localises to the plastid. It is found in the chloroplast thylakoid membrane. May help in the organization of the PsaE and PsaF subunits. The chain is Photosystem I reaction center subunit IX from Chlorella vulgaris (Green alga).